A 74-amino-acid chain; its full sequence is Benzylsuccinate synthase beta subunit (74 aa).

As to quaternary structure, heterohexamer composed of 2 alpha subunits, 2 beta subunits and 2 gamma subunits.

The catalysed reaction is toluene + fumarate = 2-benzylsuccinate. Its pathway is xenobiotic degradation; toluene degradation. Activated by the benzylsuccinate synthase activating enzyme BssD. Rapidly inactivated by oxygen. Its function is as follows. Catalyzes the addition of fumarate to the methyl group of toluene, leading to the formation of benzylsuccinate. The sequence is that of Benzylsuccinate synthase beta subunit (bssB) from Thauera aromatica.